The following is a 1843-amino-acid chain: Protein TIC 214 (1843 aa).

The next 6 helical transmembrane spans lie at 18–38 (IINS…FSIG), 64–84 (FITG…HLAL), 87–107 (PHTI…WNNH), 124–144 (LSIQ…HFIL), 172–192 (VGWL…LFWI), and 217–237 (IFSI…PSPI). Disordered regions lie at residues 244-281 (ETSK…AAEK), 557-576 (EEIE…SRKA), 582-647 (FTDN…DEVA), 724-744 (NSEE…RQEN), and 1527-1586 (SLEL…KKKK). Over residues 251-264 (REESEEETDVEIET) the composition is skewed to acidic residues. Basic and acidic residues predominate over residues 269-281 (KGTKQEQEGAAEK). The segment covering 590-639 (NTPTSTTETTSTAETTSTTETTSTTKNTSTTKNTSTTETTSTTENENTSN) has biased composition (low complexity). 2 stretches are compositionally biased toward basic and acidic residues: residues 730-744 (TKEK…RQEN) and 1527-1540 (SLEL…KKPA). The segment covering 1543–1562 (NIGSDTQKQGNPGSDPSTQQ) has biased composition (polar residues). Over residues 1563 to 1580 (KDIKKNVKEDYDGRSDIQ) the composition is skewed to basic and acidic residues.

This sequence belongs to the TIC214 family. Part of the Tic complex.

The protein localises to the plastid. It is found in the chloroplast inner membrane. Its function is as follows. Involved in protein precursor import into chloroplasts. May be part of an intermediate translocation complex acting as a protein-conducting channel at the inner envelope. In Nandina domestica (Heavenly bamboo), this protein is Protein TIC 214.